A 969-amino-acid polypeptide reads, in one-letter code: Leucine--tRNA ligase (969 aa).

The segment at 1–23 (MTESPTTSPATGSGAAAPDSDAP) is disordered. Positions 78–89 (PYPSGEGLHVGH) match the 'HIGH' region motif. The 'KMSKS' region motif lies at 737 to 741 (KIGKS). An ATP-binding site is contributed by K740.

It belongs to the class-I aminoacyl-tRNA synthetase family.

The protein localises to the cytoplasm. It catalyses the reaction tRNA(Leu) + L-leucine + ATP = L-leucyl-tRNA(Leu) + AMP + diphosphate. In Mycolicibacterium paratuberculosis (strain ATCC BAA-968 / K-10) (Mycobacterium paratuberculosis), this protein is Leucine--tRNA ligase.